The sequence spans 214 residues: MKTVLITGFEPFGGEQINPSWEVVSQLDNAILGGCRVVARQLPCVFGESLAVLNSAIDALSPSVVLAVGQAGGRTDITVERVAINVDDARIPDNRGNQPVDVPVIPNGPAAWFSTLPIKAMVSAIREAGIPASVSQTAGTFVCNHVMYGLLHKLSSMADVKGGFIHIPYLPQQAAAHPGAPSMAADTVRRALETAIITALYVDADIIVAGGATH.

Residues E80, C143, and H166 contribute to the active site.

The protein belongs to the peptidase C15 family. Homotetramer.

It is found in the cytoplasm. The catalysed reaction is Release of an N-terminal pyroglutamyl group from a polypeptide, the second amino acid generally not being Pro.. Removes 5-oxoproline from various penultimate amino acid residues except L-proline. The protein is Pyrrolidone-carboxylate peptidase of Escherichia fergusonii (strain ATCC 35469 / DSM 13698 / CCUG 18766 / IAM 14443 / JCM 21226 / LMG 7866 / NBRC 102419 / NCTC 12128 / CDC 0568-73).